The following is a 169-amino-acid chain: Peptide methionine sulfoxide reductase MsrA (169 aa).

Residue Cys10 is part of the active site.

It belongs to the MsrA Met sulfoxide reductase family.

The catalysed reaction is L-methionyl-[protein] + [thioredoxin]-disulfide + H2O = L-methionyl-(S)-S-oxide-[protein] + [thioredoxin]-dithiol. The enzyme catalyses [thioredoxin]-disulfide + L-methionine + H2O = L-methionine (S)-S-oxide + [thioredoxin]-dithiol. Its function is as follows. Has an important function as a repair enzyme for proteins that have been inactivated by oxidation. Catalyzes the reversible oxidation-reduction of methionine sulfoxide in proteins to methionine. This is Peptide methionine sulfoxide reductase MsrA from Streptococcus pyogenes serotype M28 (strain MGAS6180).